A 294-amino-acid polypeptide reads, in one-letter code: Acetyl-coenzyme A carboxylase carboxyl transferase subunit beta (294 aa).

Positions 29 to 294 (LWEKCPECGQ…TQVVKLQTNA (266 aa)) constitute a CoA carboxyltransferase N-terminal domain. The Zn(2+) site is built by Cys-33, Cys-36, Cys-52, and Cys-55. A C4-type zinc finger spans residues 33 to 55 (CPECGQVVYRKDLIDNCSVCSNC).

It belongs to the AccD/PCCB family. Acetyl-CoA carboxylase is a heterohexamer composed of biotin carboxyl carrier protein (AccB), biotin carboxylase (AccC) and two subunits each of ACCase subunit alpha (AccA) and ACCase subunit beta (AccD). Requires Zn(2+) as cofactor.

It localises to the cytoplasm. The enzyme catalyses N(6)-carboxybiotinyl-L-lysyl-[protein] + acetyl-CoA = N(6)-biotinyl-L-lysyl-[protein] + malonyl-CoA. Its pathway is lipid metabolism; malonyl-CoA biosynthesis; malonyl-CoA from acetyl-CoA: step 1/1. In terms of biological role, component of the acetyl coenzyme A carboxylase (ACC) complex. Biotin carboxylase (BC) catalyzes the carboxylation of biotin on its carrier protein (BCCP) and then the CO(2) group is transferred by the transcarboxylase to acetyl-CoA to form malonyl-CoA. The sequence is that of Acetyl-coenzyme A carboxylase carboxyl transferase subunit beta from Prochlorococcus marinus (strain NATL2A).